A 167-amino-acid chain; its full sequence is Translationally-controlled tumor protein homolog (167 aa).

The region spanning Met1–Ile167 is the TCTP domain.

The protein belongs to the TCTP family.

It is found in the cytoplasm. The protein localises to the cytoskeleton. Its function is as follows. Involved in protein synthesis. Involved in microtubule stabilization. This chain is Translationally-controlled tumor protein homolog, found in Mycosarcoma maydis (Corn smut fungus).